The following is a 701-amino-acid chain: A-type ATP synthase subunit I (701 aa).

The next 10 membrane-spanning stretches (helical) occupy residues 340 to 360 (WEISPIVFLVFTFPILFGLMF), 363 to 379 (FGNALVLLLFSIWFYRY), 388 to 408 (IPKLSIILIYSSIVAIITGLL), 435 to 455 (LYNLWPIPASVSEAIKFLLPF), 468 to 488 (MIFSVLLGALALFVSSLLGVI), 498 to 518 (FLFLEKLPLFLLYVVPIFIFM), 555 to 575 (GIVWWTSFALLYNWAAHAILV), 583 to 603 (WGSAIAMGFIEGGFEGALLLL), 612 to 632 (VLVFALSHYYILYAFSYMAYL), and 649 to 669 (IIILIIGNLLAIGLEGLVVFI).

Belongs to the V-ATPase 116 kDa subunit family. Has multiple subunits with at least A(3), B(3), C, D, E, F, H, I and proteolipid K(x).

It localises to the cell membrane. Component of the A-type ATP synthase that produces ATP from ADP in the presence of a proton gradient across the membrane. This Saccharolobus solfataricus (strain ATCC 35092 / DSM 1617 / JCM 11322 / P2) (Sulfolobus solfataricus) protein is A-type ATP synthase subunit I.